The chain runs to 695 residues: Pre-mRNA-splicing factor clf-1 (695 aa).

16 HAT repeats span residues 52–84 (EYQG…WELE), 86–118 (KEFA…AEIK), 120–152 (RNIN…VMEM), 154–185 (GDIP…LEKR), 187–218 (GEFD…FEEE), 220–259 (GTSD…YEAR), 261–295 (REYE…FEKQ), 305–337 (VILT…LEES), 339–373 (GDVD…LFLF), 383–419 (KDIG…FEIR), 421–452 (GQLT…LEQK), 454–486 (YEFE…LERG), 488–522 (DDLE…FEEE), 524–555 (GEYE…FEIN), 578–616 (EAKA…FEKT), and 621–654 (EDIE…YIFP).

This sequence belongs to the crooked-neck family. In terms of assembly, associated with the spliceosome.

The protein localises to the nucleus. Functionally, involved in pre-mRNA splicing and cell cycle progression. Required for the spliceosome assembly and initiation of the DNA replication. The protein is Pre-mRNA-splicing factor clf-1 (clf-1) of Neurospora crassa (strain ATCC 24698 / 74-OR23-1A / CBS 708.71 / DSM 1257 / FGSC 987).